The sequence spans 458 residues: Alpha-1,3/1,6-mannosyltransferase ALG2 (458 aa).

N-linked (GlcNAc...) asparagine glycosylation is found at asparagine 57 and asparagine 169. The helical transmembrane segment at 438 to 458 (NISIIYVVSIIFAVLLKVFVF) threads the bilayer.

It belongs to the glycosyltransferase group 1 family.

It localises to the endoplasmic reticulum membrane. The enzyme catalyses a beta-D-Man-(1-&gt;4)-beta-D-GlcNAc-(1-&gt;4)-alpha-D-GlcNAc-diphospho-di-trans,poly-cis-dolichol + GDP-alpha-D-mannose = an alpha-D-Man-(1-&gt;3)-beta-D-Man-(1-&gt;4)-beta-D-GlcNAc-(1-&gt;4)-alpha-D-GlcNAc-diphospho-di-trans,poly-cis-dolichol + GDP + H(+). It carries out the reaction an alpha-D-Man-(1-&gt;3)-beta-D-Man-(1-&gt;4)-beta-D-GlcNAc-(1-&gt;4)-alpha-D-GlcNAc-diphospho-di-trans,poly-cis-dolichol + GDP-alpha-D-mannose = an alpha-D-Man-(1-&gt;3)-[alpha-D-Man-(1-&gt;6)]-beta-D-Man-(1-&gt;4)-beta-D-GlcNAc-(1-&gt;4)-alpha-D-GlcNAc-diphospho-di-trans,poly-cis-dolichol + GDP + H(+). It functions in the pathway protein modification; protein glycosylation. Its function is as follows. Mannosylates Man(2)GlcNAc(2)-dolichol diphosphate and Man(1)GlcNAc(2)-dolichol diphosphate to form Man(3)GlcNAc(2)-dolichol diphosphate. This is Alpha-1,3/1,6-mannosyltransferase ALG2 (ALG2) from Candida glabrata (strain ATCC 2001 / BCRC 20586 / JCM 3761 / NBRC 0622 / NRRL Y-65 / CBS 138) (Yeast).